Consider the following 443-residue polypeptide: Threonine/serine transporter TdcC (443 aa).

The next 11 membrane-spanning stretches (helical) occupy residues threonine 22–isoleucine 42, alanine 44–phenylalanine 64, glycine 97–valine 117, phenylalanine 140–methionine 160, valine 163–isoleucine 183, isoleucine 207–isoleucine 227, alanine 259–serine 279, alanine 319–leucine 339, isoleucine 366–leucine 386, isoleucine 389–isoleucine 409, and aspartate 423–phenylalanine 443.

It belongs to the amino acid/polyamine transporter 2 family. SdaC/TdcC subfamily.

The protein localises to the cell inner membrane. The catalysed reaction is L-threonine(in) + H(+)(in) = L-threonine(out) + H(+)(out). It carries out the reaction L-serine(in) + H(+)(in) = L-serine(out) + H(+)(out). Functionally, involved in the import of threonine and serine into the cell, with the concomitant import of a proton (symport system). The sequence is that of Threonine/serine transporter TdcC from Salmonella newport (strain SL254).